We begin with the raw amino-acid sequence, 241 residues long: Orotidine 5'-phosphate decarboxylase (241 aa).

Residues Asp16, Lys37, 64–73 (DLKFHDIPTT), Thr128, Arg190, Gln199, Gly219, and Arg220 each bind substrate. Lys66 serves as the catalytic Proton donor.

It belongs to the OMP decarboxylase family. Type 1 subfamily. Homodimer.

It catalyses the reaction orotidine 5'-phosphate + H(+) = UMP + CO2. Its pathway is pyrimidine metabolism; UMP biosynthesis via de novo pathway; UMP from orotate: step 2/2. Catalyzes the decarboxylation of orotidine 5'-monophosphate (OMP) to uridine 5'-monophosphate (UMP). This is Orotidine 5'-phosphate decarboxylase from Prochlorococcus marinus (strain NATL1A).